The chain runs to 341 residues: Anthranilate phosphoribosyltransferase (341 aa).

Residues G84, G87–D88, T92, N94–T97, K112–S120, and S124 contribute to the 5-phospho-alpha-D-ribose 1-diphosphate site. G84 serves as a coordination point for anthranilate. A Mg(2+)-binding site is contributed by S96. An anthranilate-binding site is contributed by N115. R170 provides a ligand contact to anthranilate. Mg(2+)-binding residues include D229 and E230.

The protein belongs to the anthranilate phosphoribosyltransferase family. In terms of assembly, homodimer. It depends on Mg(2+) as a cofactor.

The catalysed reaction is N-(5-phospho-beta-D-ribosyl)anthranilate + diphosphate = 5-phospho-alpha-D-ribose 1-diphosphate + anthranilate. It functions in the pathway amino-acid biosynthesis; L-tryptophan biosynthesis; L-tryptophan from chorismate: step 2/5. Its function is as follows. Catalyzes the transfer of the phosphoribosyl group of 5-phosphorylribose-1-pyrophosphate (PRPP) to anthranilate to yield N-(5'-phosphoribosyl)-anthranilate (PRA). The chain is Anthranilate phosphoribosyltransferase from Polynucleobacter necessarius subsp. necessarius (strain STIR1).